A 306-amino-acid chain; its full sequence is Uricase (306 aa).

Residues K5 and T65 each act as charge relay system in the active site. The urate site is built by T65, D66, F175, R192, I240, Q241, and N267. The interval 281-306 (AKVLREPPRPTGYQQFSMDRSDLEEQ) is disordered.

Belongs to the uricase family.

It carries out the reaction urate + O2 + H2O = 5-hydroxyisourate + H2O2. The protein operates within purine metabolism; urate degradation; (S)-allantoin from urate: step 1/3. In terms of biological role, catalyzes the oxidation of uric acid to 5-hydroxyisourate, which is further processed to form (S)-allantoin. This is Uricase from Halalkalicoccus jeotgali (strain DSM 18796 / CECT 7217 / JCM 14584 / KCTC 4019 / B3).